A 1527-amino-acid chain; its full sequence is Lysophospholipase nte1 (1527 aa).

The Cytoplasmic segment spans residues 1-73 (MADSGASVPS…SPPTPTTMVG (73 aa)). The chain crosses the membrane as a helical span at residues 74–94 (WIGWVFSLVFQTIPSVLYWVI). Residues 95 to 116 (TFSTITLPTWLFTLFSMSLTFT) are Lumenal-facing. The chain crosses the membrane as a helical span at residues 117–137 (MNFTTLLLIVLGLVSTVSWFI). Topologically, residues 138–1527 (RYRFLNMYSR…RTLAPRRASI (1390 aa)) are cytoplasmic. Positions 299–310 (GSSSSMSSVQPS) are enriched in low complexity. 3 disordered regions span residues 299-387 (GSSS…RRKS), 567-596 (DQFATTPRLHSPLTEKERSPLRRSSLQRKD), and 765-785 (ATSRGATAAAPINESKRKKPS). The segment covering 364–377 (RASSYHPNGQSTAS) has biased composition (polar residues). A nucleoside 3',5'-cyclic phosphate contacts are provided by residues 682–809 (GGTS…SYRS) and 846–966 (RLTG…IAQR). In terms of domain architecture, PNPLA spans 1224–1388 (LVLGGGGARG…IDNLTVAHMK (165 aa)). Residues 1228-1233 (GGGARG) carry the GXGXXG motif. The short motif at 1255–1259 (GTSIG) is the GXSXG element. Catalysis depends on Ser-1257, which acts as the Nucleophile. Asp-1375 (proton acceptor) is an active-site residue. Positions 1375 to 1377 (DGG) match the DGA/G motif. The tract at residues 1504 to 1527 (LPLPEENEEKKKLQRTLAPRRASI) is disordered.

The protein belongs to the NTE family.

It is found in the endoplasmic reticulum membrane. It carries out the reaction a 1-acyl-sn-glycero-3-phosphocholine + H2O = sn-glycerol 3-phosphocholine + a fatty acid + H(+). Its activity is regulated as follows. Inhibited by organophosphorus esters. Its function is as follows. Intracellular phospholipase B that catalyzes the double deacylation of phosphatidylcholine (PC) to glycerophosphocholine (GroPCho). Plays an important role in membrane lipid homeostasis. Responsible for the rapid PC turnover in response to inositol, elevated temperatures, or when choline is present in the growth medium. This Emericella nidulans (strain FGSC A4 / ATCC 38163 / CBS 112.46 / NRRL 194 / M139) (Aspergillus nidulans) protein is Lysophospholipase nte1 (nte1).